A 268-amino-acid polypeptide reads, in one-letter code: Minor capsid protein VP2 (268 aa).

Residues 132-144 (STPQSLGALTGRT) show a composition bias toward polar residues. The interval 132 to 199 (STPQSLGALT…SLSSAARTRS (68 aa)) is disordered. The span at 145-163 (NSRVSAPARSSPSALSNAP) shows a compositional bias: low complexity. The segment covering 164-178 (TATSLHSNQTVSTRL) has biased composition (polar residues). A compositionally biased stretch (low complexity) spans 179-195 (GSSAGSGTGVSSLSSAA).

This sequence belongs to the norovirus VP2 family. In terms of assembly, homooligomer. The portal-like structure consists in 12 copies of VP2. Interacts with capsid protein VP1.

Its subcellular location is the virion. The protein resides in the host cytoplasm. Its function is as follows. Minor structural protein that forms a portal-like structure at a unique three-fold axis of symmetry, following binding to the host receptor. The channel formed by VP2 may allow the delivery of the viral genome through the host endosomal membrane. This Lordsdale virus (strain GII/Human/United Kingdom/Lordsdale/1993) (Human enteric calicivirus) protein is Minor capsid protein VP2.